The primary structure comprises 286 residues: 4-diphosphocytidyl-2-C-methyl-D-erythritol kinase (286 aa).

Residue lysine 11 is part of the active site. 94-104 contacts ATP; the sequence is PMGGGIGGGSS. Aspartate 136 is a catalytic residue.

This sequence belongs to the GHMP kinase family. IspE subfamily.

The enzyme catalyses 4-CDP-2-C-methyl-D-erythritol + ATP = 4-CDP-2-C-methyl-D-erythritol 2-phosphate + ADP + H(+). Its pathway is isoprenoid biosynthesis; isopentenyl diphosphate biosynthesis via DXP pathway; isopentenyl diphosphate from 1-deoxy-D-xylulose 5-phosphate: step 3/6. Functionally, catalyzes the phosphorylation of the position 2 hydroxy group of 4-diphosphocytidyl-2C-methyl-D-erythritol. The protein is 4-diphosphocytidyl-2-C-methyl-D-erythritol kinase of Pseudomonas putida (strain W619).